A 635-amino-acid chain; its full sequence is 1-deoxy-D-xylulose-5-phosphate synthase (635 aa).

Residues H72 and 113 to 115 (GHA) each bind thiamine diphosphate. Position 144 (D144) interacts with Mg(2+). Thiamine diphosphate-binding positions include 145 to 146 (GA), N174, Y286, and E369. N174 contributes to the Mg(2+) binding site.

The protein belongs to the transketolase family. DXPS subfamily. As to quaternary structure, homodimer. The cofactor is Mg(2+). Thiamine diphosphate is required as a cofactor.

The enzyme catalyses D-glyceraldehyde 3-phosphate + pyruvate + H(+) = 1-deoxy-D-xylulose 5-phosphate + CO2. Its pathway is metabolic intermediate biosynthesis; 1-deoxy-D-xylulose 5-phosphate biosynthesis; 1-deoxy-D-xylulose 5-phosphate from D-glyceraldehyde 3-phosphate and pyruvate: step 1/1. In terms of biological role, catalyzes the acyloin condensation reaction between C atoms 2 and 3 of pyruvate and glyceraldehyde 3-phosphate to yield 1-deoxy-D-xylulose-5-phosphate (DXP). In Gloeothece citriformis (strain PCC 7424) (Cyanothece sp. (strain PCC 7424)), this protein is 1-deoxy-D-xylulose-5-phosphate synthase.